Reading from the N-terminus, the 173-residue chain is NADH-ubiquinone oxidoreductase chain 6 (173 aa).

The next 5 helical transmembrane spans lie at 1 to 21 (MTYF…GVAS), 27 to 47 (YGVV…LSLG), 48 to 68 (VSFV…VVFV), 87 to 107 (VVGY…IGGL), and 139 to 159 (CGVG…FVVL).

This sequence belongs to the complex I subunit 6 family.

The protein localises to the mitochondrion membrane. It catalyses the reaction a ubiquinone + NADH + 5 H(+)(in) = a ubiquinol + NAD(+) + 4 H(+)(out). Its function is as follows. Core subunit of the mitochondrial membrane respiratory chain NADH dehydrogenase (Complex I) that is believed to belong to the minimal assembly required for catalysis. Complex I functions in the transfer of electrons from NADH to the respiratory chain. The immediate electron acceptor for the enzyme is believed to be ubiquinone. The sequence is that of NADH-ubiquinone oxidoreductase chain 6 (MT-ND6) from Synthliboramphus hypoleucus (Guadalupe murrelet).